The primary structure comprises 105 residues: Gastrin/cholecystokinin-like peptide (105 aa).

Positions 1–20 (MKTKVFLGLILSAAVTACLC) are cleaved as a signal peptide. The propeptide occupies 21 to 38 (RPAAKAPGGSHRPTSSLA). The interval 24–51 (AKAPGGSHRPTSSLARRDWPEPPSQEQQ) is disordered. The residue at position 87 (Tyr-87) is a Sulfotyrosine. Phe-93 is subject to Phenylalanine amide. Positions 97–105 (STEDAADAA) are excised as a propeptide.

The protein belongs to the gastrin/cholecystokinin family.

It localises to the secreted. In terms of biological role, potent stimulus of gastric acid, but not of pancreatic secretion. In Gallus gallus (Chicken), this protein is Gastrin/cholecystokinin-like peptide.